The sequence spans 630 residues: Protein mono-ADP-ribosyltransferase PARP6 (630 aa).

Cys237 is modified (ADP-ribosylcysteine). The PARP catalytic domain occupies 394–620 (EMTQGSYLEI…QDPKIQKEIM (227 aa)). ADP-ribosyl aspartic acid is present on Asp600.

It belongs to the ARTD/PARP family. Post-translationally, auto-mono-ADP-ribosylated.

The enzyme catalyses L-aspartyl-[protein] + NAD(+) = 4-O-(ADP-D-ribosyl)-L-aspartyl-[protein] + nicotinamide. The catalysed reaction is L-cysteinyl-[protein] + NAD(+) = S-(ADP-D-ribosyl)-L-cysteinyl-[protein] + nicotinamide + H(+). Its function is as follows. Mono-ADP-ribosyltransferase that mediates mono-ADP-ribosylation of target proteins. The chain is Protein mono-ADP-ribosyltransferase PARP6 from Mus musculus (Mouse).